The chain runs to 198 residues: Phosphoheptose isomerase (198 aa).

Residues 36–198 (MARALGADRK…DRTLFGGPGG (163 aa)) enclose the SIS domain. 51–53 (NGG) serves as a coordination point for substrate. Zn(2+) contacts are provided by His60 and Glu64. Residues Glu64, 93–94 (ND), 119–121 (STS), Ser124, and Gln174 contribute to the substrate site. Zn(2+)-binding residues include Gln174 and His182.

It belongs to the SIS family. GmhA subfamily. In terms of assembly, homotetramer. Zn(2+) serves as cofactor.

The protein resides in the cytoplasm. It carries out the reaction 2 D-sedoheptulose 7-phosphate = D-glycero-alpha-D-manno-heptose 7-phosphate + D-glycero-beta-D-manno-heptose 7-phosphate. The protein operates within carbohydrate biosynthesis; D-glycero-D-manno-heptose 7-phosphate biosynthesis; D-glycero-alpha-D-manno-heptose 7-phosphate and D-glycero-beta-D-manno-heptose 7-phosphate from sedoheptulose 7-phosphate: step 1/1. Catalyzes the isomerization of sedoheptulose 7-phosphate in D-glycero-D-manno-heptose 7-phosphate. The protein is Phosphoheptose isomerase of Halorhodospira halophila (strain DSM 244 / SL1) (Ectothiorhodospira halophila (strain DSM 244 / SL1)).